Consider the following 358-residue polypeptide: HLA class I histocompatibility antigen, alpha chain E (358 aa).

A signal peptide spans 1 to 21 (MVDGTLLLLLSEALALTQTWA). Residues 22 to 111 (GSHSLKYFHT…LRGYYNQSEA (90 aa)) form an alpha-1 region. Over 22-305 (GSHSLKYFHT…KPASQPTIPI (284 aa)) the chain is Extracellular. A peptide antigen-binding residues include Tyr-28, Glu-84, Ser-87, Asn-98, and Tyr-105. N-linked (GlcNAc...) asparagine glycosylation occurs at Asn-107. Residues 112 to 203 (GSHTLQWMHG…EKGKETLLHL (92 aa)) are alpha-2. Cys-122 and Cys-185 are oxidised to a cystine. Ser-164, Lys-167, Gln-177, Tyr-180, and Tyr-192 together coordinate a peptide antigen. The alpha-3 stretch occupies residues 204–295 (EPPKTHVTHH…GLPEPVTLRW (92 aa)). The Ig-like C1-type domain maps to 206–294 (PKTHVTHHPI…EGLPEPVTLR (89 aa)). Cys-224 and Cys-280 are joined by a disulfide. The tract at residues 296-305 (KPASQPTIPI) is connecting peptide. A helical transmembrane segment spans residues 306-329 (VGIIAGLVLLGSVVSGAVVAAVIW). Over 330–358 (RKKSSGGKGGSYSKAEWSDSAQGSESHSL) the chain is Cytoplasmic. Positions 333 to 358 (SSGGKGGSYSKAEWSDSAQGSESHSL) are disordered. Residues 348 to 358 (DSAQGSESHSL) show a composition bias toward polar residues. Ser-353 is modified (phosphoserine).

The protein belongs to the MHC class I family. Forms a heterotrimer with B2M and a self- or a pathogen-derived peptide (peptide-bound HLA-E-B2M). Similarly to MHC class Ia assembly, HLA-E-B2M heterodimer interacts with components of the antigen processing machinery TAPBP and TAP1-TAP2 complex; this interaction is required for peptide loading and translocation to the cell surface. Interacts with CALCR; this interaction is required for appropriate folding. The optimum binding peptide is a nonamer (VL9) that is primarily derived from amino-acid residues 3-11 of the signal sequences of most HLA-A, -B, -C and -G molecules. The VL9 peptide anchors to five main sites in the peptide-binding groove of HLA-E. Peptide-bound HLA-E-B2M complex interacts with KLRD1-KLRC1 receptor on NK cells. Binds with lower affinity to activating KLRD1-KLRC2. The common subunit KLRC1 plays a prominent role in directly interacting with HLA-E. Peptide-bound HLA-E-B2M interacts with the alpha-beta TCR on unconventional CD8+ T cells. Peptide-free HLA-E interacts with HLA-F-B2M complex; this interaction may regulate the intracellular trafficking and the stability of peptide-free MHC class I open conformers (OCs). Post-translationally, N-glycosylated. In terms of processing, the soluble form (sHLA-E) can be partly produced by proteolytic cleavage at the cell surface (shedding) by a matrix metalloproteinase. Alternative splicing is also suggested as a mechanism for generation of sHLA-E, although it remains to be proved. As to expression, expressed in secretory endometrial cells during pregnancy (at protein level). The expression in nonlymphoid tissues is restricted to endothelial cells from all types of vessels, including arteries, veins, capillaries, and lymphatics (at protein level). In lymphoid organs, it is mainly expressed in endothelial venules, B and T cells, monocytes, macrophages, NK cells and megakaryocytes (at protein level).

The protein localises to the cell membrane. It is found in the golgi apparatus membrane. The protein resides in the secreted. Its function is as follows. Non-classical major histocompatibility class Ib molecule involved in immune self-nonself discrimination. In complex with B2M/beta-2-microglobulin binds nonamer self-peptides derived from the signal sequence of classical MHC class Ia molecules (VL9 peptides - VMAPRT[V/L][L/V/I/F]L). Peptide-bound HLA-E-B2M heterotrimeric complex primarily functions as a ligand for natural killer (NK) cell inhibitory receptor KLRD1-KLRC1, enabling NK cells to monitor the expression of other MHC class I molecules in healthy cells and to tolerate self. Upon cellular stress, preferentially binds signal sequence-derived peptides from stress-induced chaperones and is no longer recognized by NK cell inhibitory receptor KLRD1-KLRC1, resulting in impaired protection from NK cells. Binds signal sequence-derived peptides from non-classical MHC class Ib HLA-G molecules and acts as a ligand for NK cell activating receptor KLRD1-KLRC2, likely playing a role in the generation and effector functions of adaptive NK cells and in maternal-fetal tolerance during pregnancy. Besides self-peptides, can also bind and present pathogen-derived peptides conformationally similar to VL9 peptides to alpha-beta T cell receptor (TCR) on unconventional CD8-positive cytotoxic T cells, ultimately triggering antimicrobial immune response. Presents HIV gag peptides (immunodominant KAFSPEVIPMF and subdominant KALGPAATL epitopes) predominantly to CD8-positive T cell clones expressing a TRAV17-containing TCR, triggering HLA-E-restricted T cell responses. Presents mycobacterial peptides to HLA-E-restricted CD8-positive T cells eliciting both cytotoxic and immunoregulatory functions. In terms of biological role, (Microbial infection) Viruses like human cytomegalovirus have evolved an escape mechanism whereby virus-induced down-regulation of host MHC class I molecules is coupled to the binding of viral peptides to HLA-E, restoring HLA-E expression and inducing HLA-E-dependent NK cell immune tolerance to infected cells. Functionally, (Microbial infection) May bind HIV-1 gag/Capsid protein p24-derived peptide (AISPRTLNA) on infected cells and may inhibit NK cell cytotoxicity, a mechanism that allows HIV-1 to escape immune recognition. (Microbial infection) Upon SARS-CoV-2 infection, may contribute to functional exhaustion of cytotoxic NK cells and CD8-positive T cells. Binds SARS-CoV-2 S/Spike protein S1-derived peptide (LQPRTFLL) expressed on the surface of lung epithelial cells, inducing NK cell exhaustion and dampening of antiviral immune surveillance. This Homo sapiens (Human) protein is HLA class I histocompatibility antigen, alpha chain E.